The sequence spans 358 residues: NAC domain-containing protein 12 (358 aa).

One can recognise an NAC domain in the interval 16 to 177; sequence VPPGFRFHPT…GWVVCRVFRK (162 aa). Residues 116 to 183 mediate DNA binding; the sequence is IGLRKTLVFY…VFRKKNYQKI (68 aa).

In terms of tissue distribution, stems and roots, specifically in interfascicular fibers (sclerenchyma), cells differentiating into vascular vessels (cambium), and xylem.

The protein resides in the nucleus. Its function is as follows. Transcriptional activator of genes involved in biosynthesis of secondary walls. Together with NST1, required for the secondary cell wall thickening and lignification of sclerenchymatous fibers and secondary xylem vessels (tracheary elements). Seems to repress the secondary cell wall thickening of xylary fibers. May also regulate the secondary cell wall lignification of other tissues. Binds to and activates the promoter of MYB46. The sequence is that of NAC domain-containing protein 12 from Arabidopsis thaliana (Mouse-ear cress).